A 98-amino-acid chain; its full sequence is UPF0235 protein CCNA_03737 (98 aa).

It belongs to the UPF0235 family.

This Caulobacter vibrioides (strain NA1000 / CB15N) (Caulobacter crescentus) protein is UPF0235 protein CCNA_03737.